The chain runs to 159 residues: Phosphopantetheine adenylyltransferase (159 aa).

Residue T10 participates in substrate binding. Residues 10–11 and H18 each bind ATP; that span reads TF. Residues K42, L74, and R88 each coordinate substrate. Residues 89 to 91, E99, and 124 to 130 each bind ATP; these read GMR and WSYVSST.

Belongs to the bacterial CoaD family. As to quaternary structure, homohexamer. The cofactor is Mg(2+).

Its subcellular location is the cytoplasm. The catalysed reaction is (R)-4'-phosphopantetheine + ATP + H(+) = 3'-dephospho-CoA + diphosphate. It functions in the pathway cofactor biosynthesis; coenzyme A biosynthesis; CoA from (R)-pantothenate: step 4/5. Its function is as follows. Reversibly transfers an adenylyl group from ATP to 4'-phosphopantetheine, yielding dephospho-CoA (dPCoA) and pyrophosphate. The protein is Phosphopantetheine adenylyltransferase of Mannheimia succiniciproducens (strain KCTC 0769BP / MBEL55E).